Here is a 571-residue protein sequence, read N- to C-terminus: S100P-binding protein (571 aa).

Acidic residues predominate over residues 270 to 280; the sequence is SDIPFDGDIDE. Disordered stretches follow at residues 270–312 and 356–385; these read SDIP…LESV and NGQN…CSQS. Residues 299–309 are compositionally biased toward polar residues; sequence TSESTPASSEL. The segment covering 365–378 has biased composition (pro residues); that stretch reads PLPPSDTAPGPQLP.

It is found in the nucleus. This Xenopus tropicalis (Western clawed frog) protein is S100P-binding protein (s100pbp).